We begin with the raw amino-acid sequence, 308 residues long: Elongation factor Ts (308 aa).

Residues 80–83 (TDFV) form an involved in Mg(2+) ion dislocation from EF-Tu region.

This sequence belongs to the EF-Ts family.

The protein resides in the cytoplasm. In terms of biological role, associates with the EF-Tu.GDP complex and induces the exchange of GDP to GTP. It remains bound to the aminoacyl-tRNA.EF-Tu.GTP complex up to the GTP hydrolysis stage on the ribosome. The chain is Elongation factor Ts from Agrobacterium fabrum (strain C58 / ATCC 33970) (Agrobacterium tumefaciens (strain C58)).